A 219-amino-acid chain; its full sequence is Ribose-5-phosphate isomerase A (219 aa).

Substrate-binding positions include 28–31 (TGST), 81–84 (DGAD), and 94–97 (KGGG). Glutamate 103 functions as the Proton acceptor in the catalytic mechanism. A substrate-binding site is contributed by lysine 121.

It belongs to the ribose 5-phosphate isomerase family. In terms of assembly, homodimer.

The catalysed reaction is aldehydo-D-ribose 5-phosphate = D-ribulose 5-phosphate. It functions in the pathway carbohydrate degradation; pentose phosphate pathway; D-ribose 5-phosphate from D-ribulose 5-phosphate (non-oxidative stage): step 1/1. Catalyzes the reversible conversion of ribose-5-phosphate to ribulose 5-phosphate. The protein is Ribose-5-phosphate isomerase A of Nitrosomonas europaea (strain ATCC 19718 / CIP 103999 / KCTC 2705 / NBRC 14298).